Consider the following 424-residue polypeptide: Histidine--tRNA ligase (424 aa).

The protein belongs to the class-II aminoacyl-tRNA synthetase family. Homodimer.

The protein localises to the cytoplasm. It carries out the reaction tRNA(His) + L-histidine + ATP = L-histidyl-tRNA(His) + AMP + diphosphate + H(+). The chain is Histidine--tRNA ligase from Escherichia coli O17:K52:H18 (strain UMN026 / ExPEC).